Reading from the N-terminus, the 165-residue chain is Small ribosomal subunit protein uS5 (165 aa).

The S5 DRBM domain maps to 10-73 (LNEKLIAVNR…EKARRNMVTV (64 aa)).

It belongs to the universal ribosomal protein uS5 family. As to quaternary structure, part of the 30S ribosomal subunit. Contacts proteins S4 and S8.

Its function is as follows. With S4 and S12 plays an important role in translational accuracy. In terms of biological role, located at the back of the 30S subunit body where it stabilizes the conformation of the head with respect to the body. This is Small ribosomal subunit protein uS5 from Photobacterium profundum (strain SS9).